A 127-amino-acid polypeptide reads, in one-letter code: Spore germination protein 2 (127 aa).

The first 25 residues, 1-25 (MNIRNSLILIISTILFFSIINGSLS), serve as a signal peptide directing secretion. Residues N54 and N118 are each glycosylated (N-linked (GlcNAc...) asparagine).

Belongs to the Dictyostelium gerABC family.

It is found in the secreted. In Dictyostelium discoideum (Social amoeba), this protein is Spore germination protein 2 (gerB).